Here is a 298-residue protein sequence, read N- to C-terminus: Elongation factor Ts (298 aa).

An involved in Mg(2+) ion dislocation from EF-Tu region spans residues 80–83 (TDFV).

This sequence belongs to the EF-Ts family.

It localises to the cytoplasm. Functionally, associates with the EF-Tu.GDP complex and induces the exchange of GDP to GTP. It remains bound to the aminoacyl-tRNA.EF-Tu.GTP complex up to the GTP hydrolysis stage on the ribosome. This is Elongation factor Ts from Acidovorax sp. (strain JS42).